We begin with the raw amino-acid sequence, 888 residues long: Alanine--tRNA ligase (888 aa).

Zn(2+)-binding residues include histidine 571, histidine 575, cysteine 674, and histidine 678.

This sequence belongs to the class-II aminoacyl-tRNA synthetase family. It depends on Zn(2+) as a cofactor.

The protein resides in the cytoplasm. The catalysed reaction is tRNA(Ala) + L-alanine + ATP = L-alanyl-tRNA(Ala) + AMP + diphosphate. Catalyzes the attachment of alanine to tRNA(Ala) in a two-step reaction: alanine is first activated by ATP to form Ala-AMP and then transferred to the acceptor end of tRNA(Ala). Also edits incorrectly charged Ser-tRNA(Ala) and Gly-tRNA(Ala) via its editing domain. This is Alanine--tRNA ligase from Nocardia farcinica (strain IFM 10152).